The following is a 153-amino-acid chain: Guanyl-specific ribonuclease N1 (153 aa).

The signal sequence occupies residues 1 to 20; sequence MVQLLSAFVSLLSVVAVSGA. The propeptide occupies 21–49; sequence AIPAPAPEAVVDVAPETATIEPTGNFTAQ. 2 disulfides stabilise this stretch: Cys-51–Cys-59 and Cys-55–Cys-152. His-89 is a catalytic residue. Glu-107 functions as the Proton acceptor in the catalytic mechanism. The active-site Proton donor is the His-141.

This sequence belongs to the ribonuclease N1/T1 family.

It catalyses the reaction [RNA] containing guanosine + H2O = an [RNA fragment]-3'-guanosine-3'-phosphate + a 5'-hydroxy-ribonucleotide-3'-[RNA fragment].. The chain is Guanyl-specific ribonuclease N1 (grn) from Neurospora crassa (strain ATCC 24698 / 74-OR23-1A / CBS 708.71 / DSM 1257 / FGSC 987).